We begin with the raw amino-acid sequence, 66 residues long: Large ribosomal subunit protein bL35 (66 aa).

This sequence belongs to the bacterial ribosomal protein bL35 family.

The sequence is that of Large ribosomal subunit protein bL35 from Brucella canis (strain ATCC 23365 / NCTC 10854 / RM-666).